The chain runs to 489 residues: Mitogen-activated protein kinase adapter protein MST50 (489 aa).

A disordered region spans residues 1–56 (MSFNTGTAYAESDADDEYERDIHDSSPIDATDAEASPTESDPPSNEHTPTTYGYRS). Positions 37-54 (PTESDPPSNEHTPTTYGY) are enriched in polar residues. The region spanning 69-132 (WTADECADFI…LRSVYDVKKA (64 aa)) is the SAM domain. Disordered stretches follow at residues 207–285 (PLPH…AAER) and 309–379 (SINI…GSNA). Composition is skewed to polar residues over residues 256–265 (PKATSPTHLQ) and 328–346 (ASRSYRSDQPTPSSRSTFA). The Ras-associating domain occupies 377-457 (SNASVEIFKS…PMFMLRKTNN (81 aa)).

In terms of assembly, interacts with MST7 and MST11. Interacts with MCK1, MKK2 and HIK1.

Functionally, mitogen-activated protein kinase adapter protein; part of the MST11-MST7-PMK1 MAP kinase (MAPK) cascade that is essential for appressorium formation, penetration and invasive growth. Binds to the MAPKKK MST11 and the MAPKK MST7 to maintain the stability of the MST11-MST7 complex for the phosphorylation of the MAPK PMK1. Is also involved in the MPS1 and OSM1 MAPK pathways, and especially plays a role in the activation of MPS1 in response to cell wall stress. Its function differs in the 3 MAPK pathways. In Pyricularia oryzae (strain 70-15 / ATCC MYA-4617 / FGSC 8958) (Rice blast fungus), this protein is Mitogen-activated protein kinase adapter protein MST50.